We begin with the raw amino-acid sequence, 120 residues long: Basic phospholipase A2 Cc2-PLA2 (120 aa).

Disulfide bonds link cysteine 26–cysteine 113, cysteine 28–cysteine 44, cysteine 43–cysteine 95, cysteine 49–cysteine 120, cysteine 50–cysteine 88, cysteine 57–cysteine 81, and cysteine 75–cysteine 86. 3 residues coordinate Ca(2+): tyrosine 27, glycine 29, and glycine 31. Histidine 47 is an active-site residue. Aspartate 48 is a binding site for Ca(2+). Residue aspartate 89 is part of the active site.

Belongs to the phospholipase A2 family. Group II subfamily. D49 sub-subfamily. As to quaternary structure, monomer. Ca(2+) is required as a cofactor. In terms of tissue distribution, expressed by the venom gland.

The protein localises to the secreted. The catalysed reaction is a 1,2-diacyl-sn-glycero-3-phosphocholine + H2O = a 1-acyl-sn-glycero-3-phosphocholine + a fatty acid + H(+). In terms of biological role, basic phospholipase A2 that inhibits ADP-, thrombin- and arachidonic acid-induced platelet aggregation. It also exhibits anticoagulant effects upon human plasma in vitro. It induces a high hemolytic activity reaching its maximum after 24 hours. It induces a marked elevation of plasmatic levels of interleukin-6 and -10, eosinophil peroxidase and complement lytic activities and it also provokes a drastic increase of lymphocytes, monocytes and neutrophils in peripheral blood accompanied by a rapid intense migration of neutrophils to the peritoneal cavity. PLA2 catalyzes the calcium-dependent hydrolysis of the 2-acyl groups in 3-sn-phosphoglycerides. This Cerastes cerastes (Horned desert viper) protein is Basic phospholipase A2 Cc2-PLA2.